A 761-amino-acid chain; its full sequence is Complement factor B (761 aa).

Residues 1 to 22 (MESPQLCLVLLVLGFSSGGVSA) form the signal peptide. 3 consecutive Sushi domains span residues 32 to 97 (VSCS…ECRA), 98 to 157 (IRCP…ICDD), and 160 to 217 (GYCP…SCQD). Intrachain disulfides connect cysteine 34-cysteine 73, cysteine 59-cysteine 95, cysteine 100-cysteine 142, cysteine 128-cysteine 155, cysteine 162-cysteine 202, and cysteine 188-cysteine 215. 2 N-linked (GlcNAc...) asparagine glycosylation sites follow: asparagine 119 and asparagine 139. Residues 267–466 (NIYLVLDGSD…DLENVFYQMI (200 aa)) form the VWFA domain. Mg(2+)-binding residues include serine 275 and serine 277. Asparagine 282 carries an N-linked (GlcNAc...) asparagine glycan. Position 350 (threonine 350) interacts with Mg(2+). The N-linked (GlcNAc...) asparagine glycan is linked to asparagine 375. The Peptidase S1 domain maps to 474-754 (LCGMVWEHKK…VLPWLKDKLK (281 aa)). 5 cysteine pairs are disulfide-bonded: cysteine 475–cysteine 593, cysteine 508–cysteine 524, cysteine 596–cysteine 612, cysteine 653–cysteine 679, and cysteine 692–cysteine 722. Catalysis depends on charge relay system residues histidine 523 and aspartate 573. Serine 696 acts as the Charge relay system in catalysis.

Belongs to the peptidase S1 family. In terms of assembly, monomer. Interacts with complement C3b; this interaction is dependent on the presence of Mg(2+). Catalytic component of the C3 convertase of the alternative complement pathway, also named C3bBb, composed of complement factor B Bb and complement C3b. Catalytic component of the C5 convertase of the alternative complement pathway, also named C3bBb3b, composed of complement factor B Bb and additional molecules of complement C3b. Interacts to CFP; this interaction contributes to the stabilization of the active C3-convertase enzyme complex. Mg(2+) is required as a cofactor. It depends on Mn(2+) as a cofactor. In terms of processing, cleaved by CFD following activation of the alternative complement system, generating Ba and Bb chains. Cleavage and activation takes place when CFB is already associated with complement C3b.

Its subcellular location is the secreted. It is found in the cell surface. The enzyme catalyses Cleavage of Arg-|-Ser bond in complement component C3 alpha-chain to yield C3a and C3b, and Arg-|-Xaa bond in complement component C5 alpha-chain to yield C5a and C5b.. In terms of biological role, precursor of the catalytic component of the C3 and C5 convertase complexes of the alternative pathway of the complement system, a cascade of proteins that leads to phagocytosis and breakdown of pathogens and signaling that strengthens the adaptive immune system. The alternative complement pathway acts as an amplification loop that enhances other complement pathways (classical, lectin and GZMK) by promoting formation of additional C3 and C5 convertases. CFB is cleaved and activated by CFD to generate Ba and Bb chains; Bb chain constituting the catalytic component of the C3 and C5 convertases. Serine protease component of the complement C3 and C5 convertase complexes of the alternative complement pathway. Following cleavage and activation by factor D (CFD), forms the C3 convertase together with complement C3b. As part of the C3 convertase, cleaves and activates C3 into C3a anaphylatoxin and C3b opsonin, the next components of the complement pathways. When an additional complement C3b molecule binds to the C3 convertase, forms the C5 convertase, which cleaves and activates C5 into C5a anaphylatoxin and C5b component of the membrane attack complex. Its function is as follows. Involved in proliferation and differentiation of preactivated B-lymphocytes, rapid spreading of peripheral blood monocytes, stimulation of lymphocyte blastogenesis and lysis of erythrocytes. In Mus musculus (Mouse), this protein is Complement factor B (Cfb).